A 443-amino-acid chain; its full sequence is Xaa-Pro dipeptidase (443 aa).

Positions 246, 257, 339, 384, and 423 each coordinate Mn(2+).

The protein belongs to the peptidase M24B family. Bacterial-type prolidase subfamily. Requires Mn(2+) as cofactor.

It catalyses the reaction Xaa-L-Pro dipeptide + H2O = an L-alpha-amino acid + L-proline. In terms of biological role, splits dipeptides with a prolyl residue in the C-terminal position. The protein is Xaa-Pro dipeptidase of Shigella dysenteriae serotype 1 (strain Sd197).